Here is a 146-residue protein sequence, read N- to C-terminus: Ribonuclease H (146 aa).

One can recognise an RNase H type-1 domain in the interval 1 to 141; that stretch reads MEKIDIFTDG…ADALANRGVE (141 aa). Mg(2+)-binding residues include D9, E47, D69, and D133.

The protein belongs to the RNase H family. As to quaternary structure, monomer. Mg(2+) is required as a cofactor.

The protein localises to the cytoplasm. It carries out the reaction Endonucleolytic cleavage to 5'-phosphomonoester.. In terms of biological role, endonuclease that specifically degrades the RNA of RNA-DNA hybrids. This Herminiimonas arsenicoxydans protein is Ribonuclease H.